The chain runs to 156 residues: Small ribosomal subunit protein uS7 (156 aa).

The protein belongs to the universal ribosomal protein uS7 family. In terms of assembly, part of the 30S ribosomal subunit. Contacts proteins S9 and S11.

Functionally, one of the primary rRNA binding proteins, it binds directly to 16S rRNA where it nucleates assembly of the head domain of the 30S subunit. Is located at the subunit interface close to the decoding center, probably blocks exit of the E-site tRNA. The chain is Small ribosomal subunit protein uS7 from Bacillus cereus (strain B4264).